A 71-amino-acid polypeptide reads, in one-letter code: Large ribosomal subunit protein bL31 (71 aa).

Zn(2+) is bound by residues cysteine 16, cysteine 18, cysteine 37, and cysteine 40.

The protein belongs to the bacterial ribosomal protein bL31 family. Type A subfamily. In terms of assembly, part of the 50S ribosomal subunit. Zn(2+) serves as cofactor.

Functionally, binds the 23S rRNA. The sequence is that of Large ribosomal subunit protein bL31 from Serratia proteamaculans (strain 568).